A 3595-amino-acid polypeptide reads, in one-letter code: Replicase polyprotein 1ab (3595 aa).

A C4-type; atypical zinc finger spans residues 3-23; it reads CECPRSNLVVMCSGAFCCVLC. The Peptidase C31 domain occupies 56-164; it reads SGLEGRYCAL…PTTIPFNTTG (109 aa). Catalysis depends on for Nsp1-alpha papain-like cysteine proteinase activity residues Cys-63 and His-130. A Peptidase C32 domain is found at 239–350; it reads LSFEHGRCWL…LKLPGKTYFG (112 aa). Catalysis depends on for Nsp1-beta papain-like cysteine proteinase activity residues Cys-246 and His-309. Active-site for Nsp2 cysteine proteinase activity residues include Cys-378 and His-430. The interval 482 to 527 is disordered; sequence RRGGGKKSGQSSGVRAPGRTTPDLAGDWGKAVDDQEKTASKVTTDK. Over residues 511-520 the composition is skewed to basic and acidic residues; the sequence is KAVDDQEKTA. In terms of domain architecture, Peptidase C33 spans 633 to 736; that stretch reads TFIPPPDGGC…HGWCSSLLSE (104 aa). Positions 808 to 862 are disordered; the sequence is QVRTVDPSQPAAPLPPVPRPRKRKAAAQQVSKVPSEQDPSLAHDPPEKPDSVRPP. Basic and acidic residues predominate over residues 851 to 860; the sequence is DPPEKPDSVR. Helical transmembrane passes span 922–942, 951–971, 1019–1039, 1239–1259, 1316–1336, 1345–1365, and 1381–1401; these read MFFLFLGSPLFILCAVLAGVI, ILCCCLVVVYICTLFADAISS, VALFPLHLLLLMVDVLLVIGV, IFRTALAAAWVLFFVCAGYWV, PYIVLAACLVYLASVYVPGII, ALLPAGPAISALRTLVMIIAA, and AFVDFTSVVVVLTALLVGWIL. An HD1 region spans residues 922 to 1039; it reads MFFLFLGSPL…MVDVLLVIGV (118 aa). The tract at residues 1239 to 1399 is HD2; sequence IFRTALAAAW…VVLTALLVGW (161 aa). Positions 1464 to 1664 constitute a Peptidase S32 domain; it reads GLLREKTRAS…RLLESSINLE (201 aa). Active-site charge relay system; for 3C-like serine proteinase activity residues include His-1502, Asp-1527, and Ser-1580. Helical transmembrane passes span 1673–1693, 1711–1731, 1744–1764, and 1784–1804; these read IIVAVVLWKYAVDPLSIPFVV, YNYSLFCLAAFSPLASRIFFI, ALICHACFAGIAVLNDFIILG, and AIAIAVIGALVCVAACCLELF. The HD3 stretch occupies residues 1687 to 1804; sequence LSIPFVVAFF…CVAACCLELF (118 aa). The NiRAN domain maps to 2083 to 2253; it reads DMNRLRAIIS…YPYKLHPVRG (171 aa). A RdRp catalytic domain is found at 2491–2625; the sequence is GRCLETDLAS…LNESDDLPNF (135 aa). The region spanning 2746-2812 is the AV ZBD domain; it reads GKEVQVCSIC…IPILKDRTKF (67 aa). Residues Cys-2752, Cys-2755, Cys-2765, Cys-2770, Cys-2773, His-2777, His-2779, Cys-2782, Cys-2789, His-2791, Cys-2798, and Cys-2801 each contribute to the Zn(2+) site. The (+)RNA virus helicase ATP-binding domain maps to 2862–3022; that stretch reads DLPDGKYSMK…VFELMKKNAL (161 aa). 2897–2904 is a binding site for ATP; the sequence is GPPGSGKT. One can recognise a (+)RNA virus helicase C-terminal domain in the interval 3023–3157; that stretch reads HAIYRFGQNI…DGKARVMLSD (135 aa). One can recognise an AV-Nsp11N/CoV-Nsp15M domain in the interval 3196 to 3292; sequence SGSLSPLPRV…LTKFLDGRAV (97 aa). One can recognise a NendoU domain in the interval 3294–3416; that stretch reads MEDSVYSTGR…MVWRDQTMYF (123 aa). Catalysis depends on residues His-3325, His-3340, and Lys-3369.

The protein belongs to the arteriviridae polyprotein family. In terms of processing, specific enzymatic cleavages in vivo by its own proteases yield mature proteins. There are two alternative pathways for processing. Either nsp4-5 is cleaved, which represents the major pathway or the nsp5-6 and nsp6-7 are processed, which represents the minor pathway. The major pathway occurs when nsp2 acts as a cofactor for nsp4.

It is found in the host membrane. The protein localises to the host cytoplasm. The protein resides in the host perinuclear region. The catalysed reaction is RNA(n) + a ribonucleoside 5'-triphosphate = RNA(n+1) + diphosphate. The enzyme catalyses ATP + H2O = ADP + phosphate + H(+). It catalyses the reaction uridylyl-uridylyl-ribonucleotide-RNA = a 3'-end uridylyl-2',3'-cyclophospho-uridine-RNA + a 5'-end dephospho-ribonucleoside-RNA. The replicase polyprotein 1ab is a multifunctional protein: it contains the activities necessary for the transcription of negative stranded RNA, leader RNA, subgenomic mRNAs and progeny virion RNA as well as proteinases responsible for the cleavage of the polyprotein into functional products. Functionally, the Nsp1 chain is essential for viral subgenomic mRNA synthesis. Its function is as follows. The 3C-like serine proteinase chain is responsible for the majority of cleavages as it cleaves the C-terminus of the polyprotein. In terms of biological role, plays a role in viral transcription/replication and prevents the simultaneous activation of host cell dsRNA sensors, such as MDA5/IFIH1, OAS, and PKR. Acts by degrading the 5'-polyuridines generated during replication of the poly(A) region of viral genomic and subgenomic RNAs. Catalyzes a two-step reaction in which a 2'3'-cyclic phosphate (2'3'-cP) is first generated by 2'-O transesterification, which is then hydrolyzed to a 3'-phosphate (3'-P). If not degraded, poly(U) RNA would hybridize with poly(A) RNA tails and activate host dsRNA sensors. The helicase chain, which contains a zinc finger structure, displays RNA and DNA duplex-unwinding activities with 5' to 3' polarity. The polypeptide is Replicase polyprotein 1ab (rep) (Simian hemorrhagic fever virus (SHFV)).